An 868-amino-acid chain; its full sequence is Leucine--tRNA ligase (868 aa).

The short motif at 42 to 52 is the 'HIGH' region element; the sequence is PYPSGKLHMGH. Positions 627 to 631 match the 'KMSKS' region motif; it reads KMSKS. Residue Lys-630 participates in ATP binding.

This sequence belongs to the class-I aminoacyl-tRNA synthetase family.

The protein resides in the cytoplasm. The catalysed reaction is tRNA(Leu) + L-leucine + ATP = L-leucyl-tRNA(Leu) + AMP + diphosphate. The protein is Leucine--tRNA ligase of Pseudomonas savastanoi pv. phaseolicola (strain 1448A / Race 6) (Pseudomonas syringae pv. phaseolicola (strain 1448A / Race 6)).